A 334-amino-acid chain; its full sequence is MERCSVAQQFEDRFHRKFYYLRLSVTDVCNFKCTYCLPDGYKPSGQKNSSFLSVPEIKRVVKAFADCGTSKIRITGGEPSLRKDFPEIIHTVASTPGIEKVATTTNGYRMEKQVGQWRDAGLTHINVSVDSLDSRMFHQITGENKFTEVMRGIDKAFEVGFEQVKVNVVLMKDLNSQELPAFLNWIKDKPIQLRFIELMKTGEMDELFDKHHVSGVAIRNQLIANGWLLKVKAVNDGPAQVFVHPDYQGEIGLIMPYEKDFCESCNRLRVSATGKLHLCLFGDHGVELRDLIQEDQQEQELIDRIQAQLQTKSVSHFLHDGNSGMTPNLASIGG.

One can recognise a Radical SAM core domain in the interval arginine 13–alanine 239. Position 22 (arginine 22) interacts with GTP. Residues cysteine 29 and cysteine 33 each coordinate [4Fe-4S] cluster. S-adenosyl-L-methionine is bound at residue tyrosine 35. Residue cysteine 36 coordinates [4Fe-4S] cluster. Residue arginine 73 coordinates GTP. Glycine 77 contacts S-adenosyl-L-methionine. Residue threonine 104 coordinates GTP. Serine 128 is a binding site for S-adenosyl-L-methionine. Residue lysine 165 coordinates GTP. Methionine 199 is a binding site for S-adenosyl-L-methionine. [4Fe-4S] cluster contacts are provided by cysteine 262 and cysteine 265. Arginine 267 to arginine 269 lines the GTP pocket. Cysteine 279 lines the [4Fe-4S] cluster pocket.

Belongs to the radical SAM superfamily. MoaA family. Monomer and homodimer. Requires [4Fe-4S] cluster as cofactor.

The enzyme catalyses GTP + AH2 + S-adenosyl-L-methionine = (8S)-3',8-cyclo-7,8-dihydroguanosine 5'-triphosphate + 5'-deoxyadenosine + L-methionine + A + H(+). It participates in cofactor biosynthesis; molybdopterin biosynthesis. Its function is as follows. Catalyzes the cyclization of GTP to (8S)-3',8-cyclo-7,8-dihydroguanosine 5'-triphosphate. In Vibrio atlanticus (strain LGP32) (Vibrio splendidus (strain Mel32)), this protein is GTP 3',8-cyclase.